A 78-amino-acid polypeptide reads, in one-letter code: Large ribosomal subunit protein bL28 (78 aa).

Belongs to the bacterial ribosomal protein bL28 family.

The protein is Large ribosomal subunit protein bL28 of Prochlorococcus marinus (strain MIT 9215).